We begin with the raw amino-acid sequence, 205 residues long: Snake venom metalloproteinase BmooMPalpha-I (205 aa).

Residues 8 to 204 (RYIELVVVAD…HNPQCILNEP (197 aa)) form the Peptidase M12B domain. Positions 11 and 95 each coordinate Ca(2+). Cystine bridges form between cysteine 119–cysteine 199, cysteine 159–cysteine 183, and cysteine 161–cysteine 166. Zn(2+) is bound at residue histidine 144. Glutamate 145 is a catalytic residue. Residues histidine 148 and histidine 154 each contribute to the Zn(2+) site. 2 residues coordinate Ca(2+): cysteine 199 and asparagine 202.

This sequence belongs to the venom metalloproteinase (M12B) family. P-I subfamily. Monomer. The cofactor is Zn(2+). In terms of tissue distribution, expressed by the venom gland.

The protein localises to the secreted. Inhibited by EDTA. Not inhibited by the serine proteinase inhibitors aprotinin and benzamidine. Snake venom zinc metalloproteinase that cleaves the alpha chain of fibrinogen (FGA) first followed by the beta chain (FGB) and shows no effect on the gamma chain. Cleaves only the beta chain of fibrin, leaving the gamma-dimer untouched. Shows proteolytic activity towards azocasein. Causes defibrinogenation when intraperitoneally administered on mice. The protein is Snake venom metalloproteinase BmooMPalpha-I of Bothrops moojeni (Lance-headed viper).